The following is a 339-amino-acid chain: Ketol-acid reductoisomerase (NADP(+)) (339 aa).

The KARI N-terminal Rossmann domain maps to 1–182 (MRVYYDRDAD…GGGRAGIIET (182 aa)). Residues 24 to 27 (YGSQ), Arg-48, Ser-51, Thr-53, and 83 to 86 (DELQ) each bind NADP(+). The active site involves His-108. Gly-134 contacts NADP(+). The KARI C-terminal knotted domain maps to 183–328 (SFKEECETDL…AKLREMMPWI (146 aa)). 4 residues coordinate Mg(2+): Asp-191, Glu-195, Glu-227, and Glu-231. Substrate is bound at residue Ser-252.

The protein belongs to the ketol-acid reductoisomerase family. The cofactor is Mg(2+).

The catalysed reaction is (2R)-2,3-dihydroxy-3-methylbutanoate + NADP(+) = (2S)-2-acetolactate + NADPH + H(+). It catalyses the reaction (2R,3R)-2,3-dihydroxy-3-methylpentanoate + NADP(+) = (S)-2-ethyl-2-hydroxy-3-oxobutanoate + NADPH + H(+). It functions in the pathway amino-acid biosynthesis; L-isoleucine biosynthesis; L-isoleucine from 2-oxobutanoate: step 2/4. It participates in amino-acid biosynthesis; L-valine biosynthesis; L-valine from pyruvate: step 2/4. Functionally, involved in the biosynthesis of branched-chain amino acids (BCAA). Catalyzes an alkyl-migration followed by a ketol-acid reduction of (S)-2-acetolactate (S2AL) to yield (R)-2,3-dihydroxy-isovalerate. In the isomerase reaction, S2AL is rearranged via a Mg-dependent methyl migration to produce 3-hydroxy-3-methyl-2-ketobutyrate (HMKB). In the reductase reaction, this 2-ketoacid undergoes a metal-dependent reduction by NADPH to yield (R)-2,3-dihydroxy-isovalerate. This Rhodopseudomonas palustris (strain BisB5) protein is Ketol-acid reductoisomerase (NADP(+)).